The chain runs to 261 residues: Intermembrane phospholipid transport system permease protein MlaE (261 aa).

Topologically, residues 1 to 12 are cytoplasmic; sequence MIVNFISALGKQ. The chain crosses the membrane as a helical span at residues 13–33; sequence VIDFFRALGRAGFMLFGALIG. At 34 to 49 the chain is on the periplasmic side; it reads KPQIRKHFPLLVKQMH. The helical transmembrane segment at 50–70 threads the bilayer; it reads VLGVQSLLIILLSGLFIGMVL. At 71–147 the chain is on the cytoplasmic side; sequence GLQGYVVLID…DPLRRVIAPR (77 aa). A helical membrane pass occupies residues 148–168; the sequence is FWAGVISMPVLSILFIAIGIW. Residues 169 to 198 are Periplasmic-facing; sequence GGSLVGVDWKGVDSGSFWSVMQNSVSWSYD. The helical transmembrane segment at 199–219 threads the bilayer; it reads ILNGFIKAVFFAVAVTWIALF. Topologically, residues 220-238 are cytoplasmic; the sequence is NGYDCMPTSEGISQATTRT. A helical membrane pass occupies residues 239–259; it reads VVHASLVVLGLDFILTAIMFG. Topologically, residues 260 to 261 are periplasmic; the sequence is AG.

Belongs to the MlaE permease family. In terms of assembly, the complex is composed of two ATP-binding proteins (MlaF), two transmembrane proteins (MlaE), two cytoplasmic solute-binding proteins (MlaB) and six periplasmic solute-binding proteins (MlaD).

The protein localises to the cell inner membrane. In terms of biological role, part of the ABC transporter complex MlaFEDB, which is involved in a phospholipid transport pathway that maintains lipid asymmetry in the outer membrane by retrograde trafficking of phospholipids from the outer membrane to the inner membrane. Probably responsible for the translocation of the substrate across the membrane. In Haemophilus influenzae (strain ATCC 51907 / DSM 11121 / KW20 / Rd), this protein is Intermembrane phospholipid transport system permease protein MlaE.